Here is a 123-residue protein sequence, read N- to C-terminus: Large ribosomal subunit protein uL29 (123 aa).

Position 19 is an N6-acetyllysine (K19). Residue K25 forms a Glycyl lysine isopeptide (Lys-Gly) (interchain with G-Cter in SUMO2) linkage. S29 carries the phosphoserine modification. Position 43 is an N6-acetyllysine (K43).

This sequence belongs to the universal ribosomal protein uL29 family. Component of the large ribosomal subunit.

Its subcellular location is the cytoplasm. Its function is as follows. Component of the large ribosomal subunit. The ribosome is a large ribonucleoprotein complex responsible for the synthesis of proteins in the cell. The polypeptide is Large ribosomal subunit protein uL29 (RPL35) (Sus scrofa (Pig)).